We begin with the raw amino-acid sequence, 387 residues long: 3-ketoacyl-CoA thiolase (387 aa).

Cysteine 91 (acyl-thioester intermediate) is an active-site residue. Active-site proton acceptor residues include histidine 343 and cysteine 373.

This sequence belongs to the thiolase-like superfamily. Thiolase family. As to quaternary structure, heterotetramer of two alpha chains (FadB) and two beta chains (FadA).

It is found in the cytoplasm. It carries out the reaction an acyl-CoA + acetyl-CoA = a 3-oxoacyl-CoA + CoA. It participates in lipid metabolism; fatty acid beta-oxidation. In terms of biological role, catalyzes the final step of fatty acid oxidation in which acetyl-CoA is released and the CoA ester of a fatty acid two carbons shorter is formed. The chain is 3-ketoacyl-CoA thiolase from Shigella dysenteriae serotype 1 (strain Sd197).